Consider the following 317-residue polypeptide: Melanocyte-stimulating hormone receptor (317 aa).

Residues Met1–Glu37 lie on the Extracellular side of the membrane. Residue Asn29 is glycosylated (N-linked (GlcNAc...) asparagine). Residues Val38–Ile63 form a helical membrane-spanning segment. Topologically, residues Ala64–Pro72 are cytoplasmic. The chain crosses the membrane as a helical span at residues Met73–Leu93. Residues Glu94–Asn118 lie on the Extracellular side of the membrane. The chain crosses the membrane as a helical span at residues Thr119–Val140. Residues Asp141–Arg163 lie on the Cytoplasmic side of the membrane. The chain crosses the membrane as a helical span at residues Val164–Tyr183. Topologically, residues Asp184–Cys191 are extracellular. The helical transmembrane segment at Leu192–Leu211 threads the bilayer. Topologically, residues Ala212 to Ala240 are cytoplasmic. Residues Ala241–Phe266 traverse the membrane as a helical segment. Topologically, residues Cys267–Asn279 are extracellular. The chain crosses the membrane as a helical span at residues Phe280 to Phe300. Topologically, residues Arg301–Trp317 are cytoplasmic. Cys315 carries the S-palmitoyl cysteine lipid modification.

This sequence belongs to the G-protein coupled receptor 1 family. Interacts with MGRN1, but does not undergo MGRN1-mediated ubiquitination; this interaction competes with GNAS-binding and thus inhibits agonist-induced cAMP production. Interacts with OPN3; the interaction results in a decrease in MC1R-mediated cAMP signaling and ultimately a decrease in melanin production in melanocytes.

It is found in the cell membrane. Its function is as follows. Receptor for MSH (alpha, beta and gamma) and ACTH. The activity of this receptor is mediated by G proteins which activate adenylate cyclase. Mediates melanogenesis, the production of eumelanin (black/brown) and phaeomelanin (red/yellow), via regulation of cAMP signaling in melanocytes. This chain is Melanocyte-stimulating hormone receptor (MC1R), found in Saimiri oerstedii (Central American squirrel monkey).